Consider the following 704-residue polypeptide: Polyribonucleotide nucleotidyltransferase 4 (704 aa).

Positions 483 and 489 each coordinate Mg(2+). Residues 550–609 (PRVLKMKIHPDKIRDVIGSGGKTINRIIDETGVKIDIDNDGTIFIAAESQEAVEKAIIII) form the KH domain. One can recognise an S1 motif domain in the interval 619 to 687 (GQNYTGKVIK…QQGKINLSRK (69 aa)).

This sequence belongs to the polyribonucleotide nucleotidyltransferase family. The cofactor is Mg(2+).

The protein resides in the cytoplasm. The catalysed reaction is RNA(n+1) + phosphate = RNA(n) + a ribonucleoside 5'-diphosphate. Its function is as follows. Involved in mRNA degradation. Catalyzes the phosphorolysis of single-stranded polyribonucleotides processively in the 3'- to 5'-direction. This is Polyribonucleotide nucleotidyltransferase 4 from Alkaliphilus metalliredigens (strain QYMF).